Here is a 308-residue protein sequence, read N- to C-terminus: Probable 5-dehydro-4-deoxyglucarate dehydratase (308 aa).

The protein belongs to the DapA family.

The enzyme catalyses 5-dehydro-4-deoxy-D-glucarate + H(+) = 2,5-dioxopentanoate + CO2 + H2O. It participates in carbohydrate acid metabolism; D-glucarate degradation; 2,5-dioxopentanoate from D-glucarate: step 2/2. This chain is Probable 5-dehydro-4-deoxyglucarate dehydratase (ycbC), found in Bacillus subtilis (strain 168).